We begin with the raw amino-acid sequence, 520 residues long: Beta-glucosidase 45 (520 aa).

An N-terminal signal peptide occupies residues 1–22; that stretch reads MKNLTSFVIVILLQSLLFHVYG. An N-linked (GlcNAc...) asparagine glycan is attached at asparagine 3. A beta-D-glucoside is bound by residues glutamine 52, histidine 155, and 200-201; that span reads NE. Glutamate 201 functions as the Proton donor in the catalytic mechanism. Cysteine 220 and cysteine 227 form a disulfide bridge. Asparagine 226 carries N-linked (GlcNAc...) asparagine glycosylation. An a beta-D-glucoside-binding site is contributed by tyrosine 344. Residues cysteine 352 and cysteine 357 are joined by a disulfide bond. Residue asparagine 378 is glycosylated (N-linked (GlcNAc...) asparagine). Glutamate 417 contacts a beta-D-glucoside. Glutamate 417 functions as the Nucleophile in the catalytic mechanism. Residue asparagine 435 is glycosylated (N-linked (GlcNAc...) asparagine). Residues tryptophan 466, 473–474, and phenylalanine 482 contribute to the a beta-D-glucoside site; that span reads EW.

This sequence belongs to the glycosyl hydrolase 1 family. In terms of tissue distribution, expressed in stems and siliques.

It catalyses the reaction Hydrolysis of terminal, non-reducing beta-D-glucosyl residues with release of beta-D-glucose.. In terms of biological role, hydrolyzes p-nitrophenyl beta-D-glucoside and natural glucosides such as syringin, coniferin and p-coumaryl alcohol glucoside. May be involved in lignification by hydrolyzing monolignol glucosides. This is Beta-glucosidase 45 from Arabidopsis thaliana (Mouse-ear cress).